Consider the following 88-residue polypeptide: Small ribosomal subunit protein bS20 (88 aa).

This sequence belongs to the bacterial ribosomal protein bS20 family.

Binds directly to 16S ribosomal RNA. This Aromatoleum aromaticum (strain DSM 19018 / LMG 30748 / EbN1) (Azoarcus sp. (strain EbN1)) protein is Small ribosomal subunit protein bS20.